The sequence spans 428 residues: D-serine dehydratase (428 aa).

Lysine 57 carries the N6-(pyridoxal phosphate)lysine modification. Pyridoxal 5'-phosphate is bound by residues tyrosine 203, tyrosine 210, threonine 255, glycine 286, and asparagine 287. Zn(2+)-binding residues include histidine 398 and cysteine 400.

It belongs to the DSD1 family. Homodimer. Pyridoxal 5'-phosphate serves as cofactor. It depends on Zn(2+) as a cofactor.

The enzyme catalyses D-serine = pyruvate + NH4(+). Its activity is regulated as follows. Sodium cyanoborohydride, N-ethylmaleimide, hydroxylamine, phenyhydrazin and EDTA are inhibitors of the catalytic activity. Functionally, catalyzes the conversion of D-serine to pyruvate and ammonia. May play a role in D-serine detoxification. The chain is D-serine dehydratase from Saccharomyces cerevisiae (strain ATCC 204508 / S288c) (Baker's yeast).